A 207-amino-acid chain; its full sequence is Ras-related protein Rab-7a (207 aa).

The residue at position 2 (threonine 2) is an N-acetylthreonine. The GTP site is built by serine 17, glycine 18, valine 19, glycine 20, lysine 21, threonine 22, serine 23, serine 34, asparagine 35, tyrosine 37, and threonine 40. Threonine 22 is a Mg(2+) binding site. The Switch 1 signature appears at tyrosine 28–isoleucine 41. Threonine 40 and aspartate 63 together coordinate Mg(2+). GTP is bound at residue glycine 66. A Switch 2 motif is present at residues glutamine 67 to aspartate 82. Phosphoserine is present on serine 72. Positions 125, 126, 128, 156, and 157 each coordinate GTP. Residues lysine 191 and lysine 194 each participate in a glycyl lysine isopeptide (Lys-Gly) (interchain with G-Cter in ubiquitin) cross-link. 2 S-geranylgeranyl cysteine lipidation sites follow: cysteine 205 and cysteine 207. Cysteine 207 carries the cysteine methyl ester modification.

This sequence belongs to the small GTPase superfamily. Rab family. In terms of assembly, interacts with NTRK1/TRKA, RILP, PSMA7, RNF115 and FYCO1. Interacts with the PIK3C3/VPS34-PIK3R4 complex. The GTP-bound form interacts with OSBPL1A and RAC1. Interacts with CLN3. Interacts with CHM, the substrate-binding subunit of the Rab geranylgeranyltransferase complex. Interacts with C9orf72. Does not interact with HPS4 and the BLOC-3 complex (heterodimer of HPS1 and HPS4). Interacts with CLN5. Interacts with PLEKHM1 (via N- and C-terminus). Interacts with PRPH; the interaction is direct. Interacts with VPS13A. The GDP-bound form interacts with RIMOC1. Interacts with the MON1A-CCZ1B complex and this interaction is enhanced in the presence of RIMOC1. Interacts with VPS39 and VPS41. Forms a ternary complex with LAMP2 and RUFY4; the interaction with LAMP2 is mediated by RUFY4 (via RUN and coiled coil domains). Mg(2+) is required as a cofactor. Deubiquitination at Lys-191 and Lys-194 by USP32. Post-translationally, phosphorylated at Ser-72 by LRRK1; phosphorylation is dependent on protein kinase C (PKC) activation of LRRK1. In terms of processing, prenylated. Prenylation is required for association with cellular membranes. As to expression, widely expressed. High expression in liver, heart and kidney. Found in sensory and motor neurons.

The protein localises to the cytoplasmic vesicle. It is found in the phagosome membrane. The protein resides in the late endosome membrane. Its subcellular location is the lysosome membrane. It localises to the melanosome membrane. The protein localises to the autophagosome membrane. It is found in the lipid droplet. The protein resides in the endosome membrane. Its subcellular location is the mitochondrion membrane. The enzyme catalyses GTP + H2O = GDP + phosphate + H(+). Its activity is regulated as follows. Regulated by guanine nucleotide exchange factors (GEFs) which promote the exchange of bound GDP for free GTP. Regulated by GTPase activating proteins (GAPs) which increase the GTP hydrolysis activity. Inhibited by GDP dissociation inhibitors (GDIs). Its function is as follows. The small GTPases Rab are key regulators of intracellular membrane trafficking, from the formation of transport vesicles to their fusion with membranes. Rabs cycle between an inactive GDP-bound form and an active GTP-bound form that is able to recruit to membranes different sets of downstream effectors directly responsible for vesicle formation, movement, tethering and fusion. In its active state, RAB7A binds to a variety of effector proteins playing a key role in the regulation of endo-lysosomal trafficking. Governs early-to-late endosomal maturation, microtubule minus-end as well as plus-end directed endosomal migration and positioning, and endosome-lysosome transport through different protein-protein interaction cascades. Also plays a central role in growth-factor-mediated cell signaling, nutrient-transporter-mediated nutrient uptake, neurotrophin transport in the axons of neurons and lipid metabolism. Also involved in regulation of some specialized endosomal membrane trafficking, such as maturation of melanosomes, pathogen-induced phagosomes (or vacuoles) and autophagosomes. Plays a role in the maturation and acidification of phagosomes that engulf pathogens, such as S.aureus and Mycobacteria. Plays a role in the fusion of phagosomes with lysosomes. In concert with RAC1, plays a role in regulating the formation of RBs (ruffled borders) in osteoclasts. Controls the endosomal trafficking and neurite outgrowth signaling of NTRK1/TRKA. Regulates the endocytic trafficking of the EGF-EGFR complex by regulating its lysosomal degradation. Involved in the ADRB2-stimulated lipolysis through lipophagy, a cytosolic lipase-independent autophagic pathway. Required for the exosomal release of SDCBP, CD63 and syndecan. Required for vesicular trafficking and cell surface expression of ACE2. May play a role in PRPH neuronal intermediate filament assembly. This Mus musculus (Mouse) protein is Ras-related protein Rab-7a.